Consider the following 121-residue polypeptide: Large ribosomal subunit protein uL24 (121 aa).

The protein belongs to the universal ribosomal protein uL24 family. As to quaternary structure, part of the 50S ribosomal subunit.

One of two assembly initiator proteins, it binds directly to the 5'-end of the 23S rRNA, where it nucleates assembly of the 50S subunit. Its function is as follows. Located at the polypeptide exit tunnel on the outside of the subunit. The chain is Large ribosomal subunit protein uL24 from Pyrococcus abyssi (strain GE5 / Orsay).